The sequence spans 267 residues: 5'-nucleotidase SurE (267 aa).

4 residues coordinate a divalent metal cation: Asp-14, Asp-15, Ser-45, and Asn-100.

Belongs to the SurE nucleotidase family. It depends on a divalent metal cation as a cofactor.

The protein resides in the cytoplasm. The enzyme catalyses a ribonucleoside 5'-phosphate + H2O = a ribonucleoside + phosphate. Functionally, nucleotidase that shows phosphatase activity on nucleoside 5'-monophosphates. The protein is 5'-nucleotidase SurE of Methanosarcina barkeri (strain Fusaro / DSM 804).